We begin with the raw amino-acid sequence, 496 residues long: MVVSDVAGSQSRYDAVLVGAGIMSATLAALLHELDPELSLLMVERLQAPGLESSAAENNAGTGHAANCELNYTPLQPDGSVATAKALAINTAFERSLEFWASLTEKGKLLPQQFLHLVPHISVVFGDADLAFLHQRFQQLSALPAFASMQWSTDVAELAEWMPLVMEGRANAESVAATCIKRGTDVDFGLLTGAYVKSLQASGALELSCGCEVVHLHRLGKHQWNLDLKHSSGSRSVQTPFVFLGAGGGALPLLQRSGIPEAAAYAGFPVSGQWLVCSEPGLTARHHAKVYGKAKVGAPPMSVPHLDSRWIDGCRSLLFGPYAGFSSKFLKQGSRLDLLRSVRRSNFRSMLEVGFKNFDLVTYLLSELQQSEKDRFETLKQFLPNAQLNDWKLSVAGQRVQIIKRTAEGGRLQMGTEVVSAQDGSLAALLGASPGASTAVTVMLEVLQRCWSERMASESWQQRLRKLLPSYGHDPNSEPLLLTQMRIRSNKLLNFT.

It belongs to the MQO family. FAD serves as cofactor.

The catalysed reaction is (S)-malate + a quinone = a quinol + oxaloacetate. Its pathway is carbohydrate metabolism; tricarboxylic acid cycle; oxaloacetate from (S)-malate (quinone route): step 1/1. The sequence is that of Probable malate:quinone oxidoreductase from Prochlorococcus marinus (strain MIT 9313).